Consider the following 413-residue polypeptide: Probable alpha-tubulin polyglutamylase Ttll1 (413 aa).

Residues 2-370 (ASKKLKYKTD…DDWNDDSSKT (369 aa)) form the TTL domain. ATP is bound by residues 184–187 (SRYI), lysine 197, and aspartate 199.

The protein belongs to the tubulin polyglutamylase family.

The protein localises to the cytoplasm. Its subcellular location is the cytoskeleton. It is found in the cilium basal body. The protein resides in the contractile vacuole. Functionally, probable tubulin polyglutamylase with a strong preference for alpha-tubulin. Modifies alpha-tubulin, generating side chains of glutamate on the gamma-carboxyl groups of specific glutamate residues within the C-terminal tail of alpha-tubulin. In Tetrahymena thermophila (strain SB210), this protein is Probable alpha-tubulin polyglutamylase Ttll1 (Ttll1).